The primary structure comprises 463 residues: MSKLWGGRFTEEAEAWVEEFGASISFDQQLVNQDINGSIAHVTMLAKQGIVTKEEAEKIKIGLQYLLEEAKQNKLHFSVEAEDIHLNIEKMLIEKIGEVGGKLHTGRSRNDQVATDMHLYLNEKVEHIIKATKQLQTVLVHQAENNIETIMPGYTHLQRAQPISFAHHILAYFWMLERDVNRYEDSLKRINISPLGAGALAGTTFPIDREYSAELLGFNGIYENSLDAVSDRDFILEFLSNSSMLMMHLSRFCEELILWSSQEFQFIEMSDQYATGSSIMPQKKNPDMAELIRGKTGRVYGNLFSLLTVMKGLPLAYNKDLQEDKEGMFDTVKTVEGCLHIMAGMLETMTVNKEKMGQAVTQDFSNATEIADYLANKGLPFRQAHEIVGKLVLHCTQKGIYLVDVPLETYKEMSSLFEEDLYEVLSPYAAVKRRNSAGGTGFEQIEKALEKAKGLVGEFVGIK.

It belongs to the lyase 1 family. Argininosuccinate lyase subfamily.

It is found in the cytoplasm. The enzyme catalyses 2-(N(omega)-L-arginino)succinate = fumarate + L-arginine. Its pathway is amino-acid biosynthesis; L-arginine biosynthesis; L-arginine from L-ornithine and carbamoyl phosphate: step 3/3. The protein is Argininosuccinate lyase of Bacillus cereus (strain AH187).